We begin with the raw amino-acid sequence, 56 residues long: Large ribosomal subunit protein bL33A (56 aa).

It belongs to the bacterial ribosomal protein bL33 family.

The sequence is that of Large ribosomal subunit protein bL33A from Cutibacterium acnes (strain DSM 16379 / KPA171202) (Propionibacterium acnes).